Reading from the N-terminus, the 922-residue chain is Two-component sensor PprA (922 aa).

Residues 1–10 (MFEFSRSSSA) show a composition bias toward low complexity. The disordered stretch occupies residues 1 to 22 (MFEFSRSSSAEAERPEPFSQEG). The PAC 1 domain occupies 506–558 (VKTRYRLADGQGNWHWLYDEAKLLRDAQGLPSEAVGLWLDVTEQHLAAQRIAE). Positions 559–622 (SEERYRVLVE…EDASALRARL (64 aa)) constitute a PAS domain. Residues 632–684 (EVPELRFNLPGQRFLWLVWAERPLFDARGELCEVQAVGRDNTPVRRAQQQLAQ) enclose the PAC 2 domain. Residues 697 to 916 (GLAHEVKQPL…LFVVRLPLAA (220 aa)) enclose the Histidine kinase domain. Histidine 700 is modified (phosphohistidine; by autocatalysis).

Autophosphorylated.

It catalyses the reaction ATP + protein L-histidine = ADP + protein N-phospho-L-histidine.. Functionally, member of the two-component regulatory system PprA/PprB involved in biofilm formation by controlling the expression of many related genes including type IVb pili major subunit flp pilin, adhesin bapA or cupE fimbriae. Functions as a heme sensor histidine kinase which is autophosphorylated at a histidine residue and transfers its phosphate group to PprB. This Pseudomonas aeruginosa (strain ATCC 15692 / DSM 22644 / CIP 104116 / JCM 14847 / LMG 12228 / 1C / PRS 101 / PAO1) protein is Two-component sensor PprA.